The primary structure comprises 138 residues: UPF0355 protein SSP2326 (138 aa).

A disordered region spans residues 115–138; the sequence is NVAFETNQTKSNSHYSEETNGPKS. The segment covering 118–138 has biased composition (polar residues); that stretch reads FETNQTKSNSHYSEETNGPKS.

It belongs to the UPF0355 family.

This is UPF0355 protein SSP2326 from Staphylococcus saprophyticus subsp. saprophyticus (strain ATCC 15305 / DSM 20229 / NCIMB 8711 / NCTC 7292 / S-41).